The primary structure comprises 267 residues: Eukaryotic translation initiation factor 3 subunit J (267 aa).

2 disordered regions span residues 1-118 (MAPS…DLKH) and 221-241 (MREERAADKGNKKTKAAKTKV). Acidic residues predominate over residues 28–46 (DEEEEDVLDSWDAAEDSEV). Residues 44 to 99 (SEVEREKAAKAAAAAAKAEAEAAAKKKSKAQRIEERKQERKKLAEANESDEDSEED) are a coiled coil. Positions 74 to 88 (QRIEERKQERKKLAE) are enriched in basic and acidic residues. Positions 90–100 (NESDEDSEEDE) are enriched in acidic residues. Composition is skewed to basic and acidic residues over residues 108 to 118 (RRTEKEGDLKH) and 221 to 231 (MREERAADKGN).

It belongs to the eIF-3 subunit J family. In terms of assembly, component of the eukaryotic translation initiation factor 3 (eIF-3) complex.

It is found in the cytoplasm. Its function is as follows. Component of the eukaryotic translation initiation factor 3 (eIF-3) complex, which is involved in protein synthesis of a specialized repertoire of mRNAs and, together with other initiation factors, stimulates binding of mRNA and methionyl-tRNAi to the 40S ribosome. The eIF-3 complex specifically targets and initiates translation of a subset of mRNAs involved in cell proliferation. The sequence is that of Eukaryotic translation initiation factor 3 subunit J (hcr1) from Aspergillus fumigatus (strain CBS 144.89 / FGSC A1163 / CEA10) (Neosartorya fumigata).